We begin with the raw amino-acid sequence, 236 residues long: Transmembrane protein 70 homolog, mitochondrial (236 aa).

The N-terminal 64 residues, 1–64, are a transit peptide targeting the mitochondrion; that stretch reads MLGLRAMLPK…WLSVKSTKTE (64 aa). 2 helical membrane-spanning segments follow: residues 83–103 and 116–136; these read MVKF…PILL and VFLC…LHFI.

Belongs to the TMEM70 family. As to quaternary structure, associates with mitochondrial complex I assembly intermediates during its biogenesis.

The protein localises to the mitochondrion membrane. Scaffold protein that participates in the c-ring assembly of mitochondrial ATP synthase (F(1)F(0) ATP synthase or complex V). Also binds the mitochondrial proton-transporting ATP synthase complex I and may play a role in the stability of its membrane-bound subassemblies. This chain is Transmembrane protein 70 homolog, mitochondrial, found in Drosophila melanogaster (Fruit fly).